The following is a 347-amino-acid chain: Histidinol-phosphate aminotransferase (347 aa).

K209 is modified (N6-(pyridoxal phosphate)lysine).

Belongs to the class-II pyridoxal-phosphate-dependent aminotransferase family. Histidinol-phosphate aminotransferase subfamily. Homodimer. Requires pyridoxal 5'-phosphate as cofactor.

The catalysed reaction is L-histidinol phosphate + 2-oxoglutarate = 3-(imidazol-4-yl)-2-oxopropyl phosphate + L-glutamate. It functions in the pathway amino-acid biosynthesis; L-histidine biosynthesis; L-histidine from 5-phospho-alpha-D-ribose 1-diphosphate: step 7/9. The protein is Histidinol-phosphate aminotransferase of Geotalea uraniireducens (strain Rf4) (Geobacter uraniireducens).